Reading from the N-terminus, the 342-residue chain is Anthranilate phosphoribosyltransferase (342 aa).

Residues glycine 90, 93–94 (GD), threonine 98, 100–103 (NIST), 118–126 (KHGNRSVSS), and alanine 130 each bind 5-phospho-alpha-D-ribose 1-diphosphate. An anthranilate-binding site is contributed by glycine 90. Residue serine 102 participates in Mg(2+) binding. Residue asparagine 121 participates in anthranilate binding. Arginine 176 is an anthranilate binding site. Aspartate 234 and glutamate 235 together coordinate Mg(2+).

The protein belongs to the anthranilate phosphoribosyltransferase family. In terms of assembly, homodimer. It depends on Mg(2+) as a cofactor.

The enzyme catalyses N-(5-phospho-beta-D-ribosyl)anthranilate + diphosphate = 5-phospho-alpha-D-ribose 1-diphosphate + anthranilate. It participates in amino-acid biosynthesis; L-tryptophan biosynthesis; L-tryptophan from chorismate: step 2/5. Catalyzes the transfer of the phosphoribosyl group of 5-phosphorylribose-1-pyrophosphate (PRPP) to anthranilate to yield N-(5'-phosphoribosyl)-anthranilate (PRA). The sequence is that of Anthranilate phosphoribosyltransferase from Mannheimia succiniciproducens (strain KCTC 0769BP / MBEL55E).